We begin with the raw amino-acid sequence, 596 residues long: Elongation factor 4 (596 aa).

Positions 2-183 (NNIRNFSIIA…TIIRKIPPPK (182 aa)) constitute a tr-type G domain. Residues 14–19 (DHGKST) and 130–133 (NKID) contribute to the GTP site.

This sequence belongs to the TRAFAC class translation factor GTPase superfamily. Classic translation factor GTPase family. LepA subfamily.

Its subcellular location is the cell inner membrane. The catalysed reaction is GTP + H2O = GDP + phosphate + H(+). Its function is as follows. Required for accurate and efficient protein synthesis under certain stress conditions. May act as a fidelity factor of the translation reaction, by catalyzing a one-codon backward translocation of tRNAs on improperly translocated ribosomes. Back-translocation proceeds from a post-translocation (POST) complex to a pre-translocation (PRE) complex, thus giving elongation factor G a second chance to translocate the tRNAs correctly. Binds to ribosomes in a GTP-dependent manner. In Campylobacter fetus subsp. fetus (strain 82-40), this protein is Elongation factor 4.